Reading from the N-terminus, the 188-residue chain is Putative manganese efflux pump MntP (188 aa).

Transmembrane regions (helical) follow at residues 3–23 (LYAL…VALA), 35–55 (IAAT…AGWV), 63–83 (FISE…GLKM), 104–126 (WMTV…GLAF), 140–160 (MAAT…GVLF), and 167–187 (AGGL…LGLI).

Belongs to the MntP (TC 9.B.29) family.

The protein localises to the cell inner membrane. Functionally, probably functions as a manganese efflux pump. The protein is Putative manganese efflux pump MntP of Neisseria gonorrhoeae (strain ATCC 700825 / FA 1090).